A 142-amino-acid polypeptide reads, in one-letter code: Large ribosomal subunit protein uL11 (142 aa).

It belongs to the universal ribosomal protein uL11 family. As to quaternary structure, part of the ribosomal stalk of the 50S ribosomal subunit. Interacts with L10 and the large rRNA to form the base of the stalk. L10 forms an elongated spine to which L12 dimers bind in a sequential fashion forming a multimeric L10(L12)X complex. In terms of processing, one or more lysine residues are methylated.

Its function is as follows. Forms part of the ribosomal stalk which helps the ribosome interact with GTP-bound translation factors. This is Large ribosomal subunit protein uL11 from Brucella anthropi (strain ATCC 49188 / DSM 6882 / CCUG 24695 / JCM 21032 / LMG 3331 / NBRC 15819 / NCTC 12168 / Alc 37) (Ochrobactrum anthropi).